The following is a 422-amino-acid chain: UDP-N-acetylmuramoylalanine--D-glutamate ligase (422 aa).

102-108 (GTNGKTT) provides a ligand contact to ATP.

Belongs to the MurCDEF family.

It is found in the cytoplasm. It carries out the reaction UDP-N-acetyl-alpha-D-muramoyl-L-alanine + D-glutamate + ATP = UDP-N-acetyl-alpha-D-muramoyl-L-alanyl-D-glutamate + ADP + phosphate + H(+). It functions in the pathway cell wall biogenesis; peptidoglycan biosynthesis. In terms of biological role, cell wall formation. Catalyzes the addition of glutamate to the nucleotide precursor UDP-N-acetylmuramoyl-L-alanine (UMA). The chain is UDP-N-acetylmuramoylalanine--D-glutamate ligase from Helicobacter pylori (strain ATCC 700392 / 26695) (Campylobacter pylori).